Reading from the N-terminus, the 369-residue chain is Microtubule-associated protein 6 homolog (369 aa).

Disordered stretches follow at residues 41–213 and 251–369; these read LPAQ…AADA and AQYK…EAKE. Residues 70-80 show a composition bias toward low complexity; the sequence is APGPARPGTAP. Mn regions lie at residues 87–110 and 122–145; these read DSVM…KPKS and ETQY…WIPK. Composition is skewed to basic and acidic residues over residues 89 to 110, 118 to 142, and 179 to 209; these read VMRH…KPKS, PFEK…DHPW, and EHPK…RGRA. The tract at residues 228–251 is mn 3; sequence SSSYRNEFRPWIDVKPVKAIKAKA. The segment covering 297 to 308 has biased composition (basic and acidic residues); the sequence is PYKEPPKVEKPS. Residues 312–328 show a composition bias toward basic residues; the sequence is SKPKKTTTSHKPLKKAK. The segment covering 350–369 has biased composition (basic and acidic residues); it reads KPEDKEKSKEMNNKLAEAKE.

It belongs to the STOP family.

Its subcellular location is the cytoplasm. The protein resides in the cytoskeleton. In terms of biological role, involved in microtubule stabilization in many cell types, including neuronal cells. Specifically has microtubule cold stabilizing activity. Involved in dendrite morphogenesis and maintenance by regulating lysosomal trafficking. This is Microtubule-associated protein 6 homolog (MAP6) from Gallus gallus (Chicken).